The sequence spans 338 residues: Anthranilate phosphoribosyltransferase (338 aa).

Residues G78, 81–82 (GD), T86, 88–91 (NIST), 106–114 (KHGNRSVSS), and S118 each bind 5-phospho-alpha-D-ribose 1-diphosphate. Residue G78 participates in anthranilate binding. Mg(2+) is bound at residue S90. Residue N109 coordinates anthranilate. Residue R164 participates in anthranilate binding. Positions 223 and 224 each coordinate Mg(2+).

It belongs to the anthranilate phosphoribosyltransferase family. In terms of assembly, homodimer. It depends on Mg(2+) as a cofactor.

The enzyme catalyses N-(5-phospho-beta-D-ribosyl)anthranilate + diphosphate = 5-phospho-alpha-D-ribose 1-diphosphate + anthranilate. The protein operates within amino-acid biosynthesis; L-tryptophan biosynthesis; L-tryptophan from chorismate: step 2/5. Functionally, catalyzes the transfer of the phosphoribosyl group of 5-phosphorylribose-1-pyrophosphate (PRPP) to anthranilate to yield N-(5'-phosphoribosyl)-anthranilate (PRA). In Bacillus subtilis (strain 168), this protein is Anthranilate phosphoribosyltransferase.